The sequence spans 1713 residues: Serine/threonine-protein kinase MRCK beta (1713 aa).

Residues 76 to 342 (FEIIKVIGRG…IEDFKKHAFF (267 aa)) form the Protein kinase domain. Residues 82–90 (IGRGAFGEV) and lysine 105 contribute to the ATP site. Aspartate 200 functions as the Proton acceptor in the catalytic mechanism. Phosphoserine; by autocatalysis occurs at positions 221 and 233. Threonine 239 bears the Phosphothreonine; by autocatalysis mark. In terms of domain architecture, AGC-kinase C-terminal spans 343 to 413 (EGLNWENIRN…TTESCFSDRG (71 aa)). Threonine 423 bears the Phosphothreonine mark. Residues 434–649 (LENSLQIEAY…ASKERKLREH (216 aa)) are a coiled coil. Omega-N-methylarginine is present on arginine 671. Coiled-coil stretches lie at residues 681 to 815 (QEIS…AHWE) and 878 to 939 (ELQS…FRAD). Serine 927 carries the post-translational modification Phosphoserine. Position 954 is a phosphotyrosine (tyrosine 954). Over residues 971–994 (ASDQETQASKMDLSPSVSVATSTE) the composition is skewed to polar residues. Residues 971–1022 (ASDQETQASKMDLSPSVSVATSTEQQEDMARPQQRPSPVPLPSTQALAMAGP) form a disordered region. The Phorbol-ester/DAG-type zinc-finger motif lies at 1026–1076 (AHQFSIKSFPSPTQCSHCTSLMVGLIRQGYACEVCAFSCHVSCKDSAPQVC). The PH domain maps to 1096–1215 (GTAYKGYVKV…WVGILEGLQA (120 aa)). The CNH domain occupies 1241-1515 (IKAVLAAAIV…RPLNSDGSLN (275 aa)). The CRIB domain occupies 1585-1598 (ISNPTNFNHVAHMG). The segment at 1616–1713 (TVQEEKQGPT…EGLDQPSCDA (98 aa)) is disordered. The segment covering 1666–1677 (DFDKEPDSDSTK) has biased composition (basic and acidic residues). Phosphoserine occurs at positions 1682, 1684, 1688, 1692, and 1695.

This sequence belongs to the protein kinase superfamily. AGC Ser/Thr protein kinase family. DMPK subfamily. Homodimer and homotetramer via the coiled coil regions. Interacts tightly with GTP-bound but not GDP-bound CDC42. Interacts with TJP1; this interaction requires the presence of catalytically active CDC42. Forms a tripartite complex with MYO18A and LURAP1 with the latter acting as an adapter connecting CDC42BPB and MYO18A. LURAP1 binding results in activation of CDC42BPB by abolition of its negative autoregulation. Interacts with STRIP1, STRN3 and SIKE1. Interacts with CPNE4 (via VWFA domain). Interacts with LURAP1. Interacts (via AGC-kinase C-terminal domain) with FAM89B/LRAP25 (via LRR repeat). Forms a tripartite complex with FAM89B/LRAP25 and LIMK1. The cofactor is Mg(2+). Proteolytically cleaved by caspases upon apoptosis induction.

It is found in the cytoplasm. It localises to the cell membrane. The protein localises to the cell junction. The protein resides in the cell projection. Its subcellular location is the lamellipodium. It catalyses the reaction L-seryl-[protein] + ATP = O-phospho-L-seryl-[protein] + ADP + H(+). It carries out the reaction L-threonyl-[protein] + ATP = O-phospho-L-threonyl-[protein] + ADP + H(+). Maintained in an inactive, closed conformation by an interaction between the kinase domain and the negative autoregulatory C-terminal coiled-coil region. Agonist binding to the phorbol ester binding site disrupts this, releasing the kinase domain to allow N-terminus-mediated dimerization and kinase activation by transautophosphorylation. Inhibited by chelerythrine chloride. Its function is as follows. Serine/threonine-protein kinase which is an important downstream effector of CDC42 and plays a role in the regulation of cytoskeleton reorganization and cell migration. Regulates actin cytoskeletal reorganization via phosphorylation of PPP1R12C and MYL9/MLC2. In concert with MYO18A and LURAP1, is involved in modulating lamellar actomyosin retrograde flow that is crucial to cell protrusion and migration. Phosphorylates PPP1R12A. In concert with FAM89B/LRAP25 mediates the targeting of LIMK1 to the lamellipodium resulting in its activation and subsequent phosphorylation of CFL1 which is important for lamellipodial F-actin regulation. In Mus musculus (Mouse), this protein is Serine/threonine-protein kinase MRCK beta.